The primary structure comprises 311 residues: tRNA-cytidine(32) 2-sulfurtransferase (311 aa).

A PP-loop motif motif is present at residues 47-52 (SGGKDS). Cysteine 122, cysteine 125, and cysteine 213 together coordinate [4Fe-4S] cluster.

It belongs to the TtcA family. Homodimer. It depends on Mg(2+) as a cofactor. Requires [4Fe-4S] cluster as cofactor.

Its subcellular location is the cytoplasm. It catalyses the reaction cytidine(32) in tRNA + S-sulfanyl-L-cysteinyl-[cysteine desulfurase] + AH2 + ATP = 2-thiocytidine(32) in tRNA + L-cysteinyl-[cysteine desulfurase] + A + AMP + diphosphate + H(+). The protein operates within tRNA modification. In terms of biological role, catalyzes the ATP-dependent 2-thiolation of cytidine in position 32 of tRNA, to form 2-thiocytidine (s(2)C32). The sulfur atoms are provided by the cysteine/cysteine desulfurase (IscS) system. This chain is tRNA-cytidine(32) 2-sulfurtransferase, found in Escherichia coli O127:H6 (strain E2348/69 / EPEC).